The primary structure comprises 328 residues: Phosphate acetyltransferase (328 aa).

It belongs to the phosphate acetyltransferase and butyryltransferase family.

It localises to the cytoplasm. The catalysed reaction is acetyl-CoA + phosphate = acetyl phosphate + CoA. The protein operates within metabolic intermediate biosynthesis; acetyl-CoA biosynthesis; acetyl-CoA from acetate: step 2/2. This is Phosphate acetyltransferase (pta) from Staphylococcus aureus (strain COL).